We begin with the raw amino-acid sequence, 338 residues long: Holliday junction branch migration complex subunit RuvB (338 aa).

The interval 1-180 is large ATPase domain (RuvB-L); sequence MTRLVTPDIT…FGVISRLEFY (180 aa). Residues Leu19, Arg20, Gly61, Lys64, Thr65, Thr66, 127-129, Arg170, Tyr180, and Arg217 each bind ATP; that span reads EDY. A Mg(2+)-binding site is contributed by Thr65. Residues 181–251 form a small ATPAse domain (RuvB-S) region; that stretch reads TDDELTTIVT…VVDESLKLLE (71 aa). The interval 254-338 is head domain (RuvB-H); sequence EKGFDHMDRT…PPSSSQGNLF (85 aa). DNA-binding residues include Arg290, Arg309, and Arg314.

The protein belongs to the RuvB family. Homohexamer. Forms an RuvA(8)-RuvB(12)-Holliday junction (HJ) complex. HJ DNA is sandwiched between 2 RuvA tetramers; dsDNA enters through RuvA and exits via RuvB. An RuvB hexamer assembles on each DNA strand where it exits the tetramer. Each RuvB hexamer is contacted by two RuvA subunits (via domain III) on 2 adjacent RuvB subunits; this complex drives branch migration. In the full resolvosome a probable DNA-RuvA(4)-RuvB(12)-RuvC(2) complex forms which resolves the HJ.

The protein localises to the cytoplasm. The enzyme catalyses ATP + H2O = ADP + phosphate + H(+). Its function is as follows. The RuvA-RuvB-RuvC complex processes Holliday junction (HJ) DNA during genetic recombination and DNA repair, while the RuvA-RuvB complex plays an important role in the rescue of blocked DNA replication forks via replication fork reversal (RFR). RuvA specifically binds to HJ cruciform DNA, conferring on it an open structure. The RuvB hexamer acts as an ATP-dependent pump, pulling dsDNA into and through the RuvAB complex. RuvB forms 2 homohexamers on either side of HJ DNA bound by 1 or 2 RuvA tetramers; 4 subunits per hexamer contact DNA at a time. Coordinated motions by a converter formed by DNA-disengaged RuvB subunits stimulates ATP hydrolysis and nucleotide exchange. Immobilization of the converter enables RuvB to convert the ATP-contained energy into a lever motion, pulling 2 nucleotides of DNA out of the RuvA tetramer per ATP hydrolyzed, thus driving DNA branch migration. The RuvB motors rotate together with the DNA substrate, which together with the progressing nucleotide cycle form the mechanistic basis for DNA recombination by continuous HJ branch migration. Branch migration allows RuvC to scan DNA until it finds its consensus sequence, where it cleaves and resolves cruciform DNA. This chain is Holliday junction branch migration complex subunit RuvB, found in Geobacter metallireducens (strain ATCC 53774 / DSM 7210 / GS-15).